Reading from the N-terminus, the 134-residue chain is Holo-[acyl-carrier-protein] synthase (134 aa).

Residues D8 and E57 each coordinate Mg(2+).

The protein belongs to the P-Pant transferase superfamily. AcpS family. The cofactor is Mg(2+).

It is found in the cytoplasm. It catalyses the reaction apo-[ACP] + CoA = holo-[ACP] + adenosine 3',5'-bisphosphate + H(+). Functionally, transfers the 4'-phosphopantetheine moiety from coenzyme A to a Ser of acyl-carrier-protein. The protein is Holo-[acyl-carrier-protein] synthase of Rhizobium rhizogenes (strain K84 / ATCC BAA-868) (Agrobacterium radiobacter).